Reading from the N-terminus, the 265-residue chain is Apolipoprotein A-I (265 aa).

An N-terminal signal peptide occupies residues 1 to 20 (METKAVVLTLAVLFLTGSQA). A run of 2 repeats spans residues 69–90 (LKIL…EQMR) and 91–112 (PIFQ…EVLN). A 10 X approximate tandem repeats region spans residues 69 to 265 (LKILDNWDTL…DEATKKLNSQ (197 aa)). A 3; half-length repeat occupies 113 to 123 (KDLEELKQKVQ). 5 repeat units span residues 124–145 (PYLD…QKMA), 146–167 (PLGT…EKLG), 168–189 (PLGE…TQLA), 190–209 (PYTE…LKES), and 210–230 (NLAE…ENAK). The residue at position 195 (M195) is a Methionine sulfoxide. The stretch at 231–241 (PALEDFRQGLM) is one 9; half-length repeat. M241 carries the post-translational modification Methionine sulfoxide. Copy 10 of the repeat occupies 242–265 (PVLEGFQKSVLAALDEATKKLNSQ).

This sequence belongs to the apolipoprotein A1/A4/E family. Homodimer. Interacts with APOA1BP and CLU. Component of a sperm activating protein complex (SPAP), consisting of APOA1, an immunoglobulin heavy chain, an immunoglobulin light chain and albumin. Interacts with NDRG1. Interacts with SCGB3A2. Interacts with NAXE and YJEFN3. In terms of processing, glycosylated. Palmitoylated. Post-translationally, phosphorylation sites are present in the extracellular medium. In terms of tissue distribution, major protein of plasma HDL, also found in chylomicrons.

It localises to the secreted. In terms of biological role, participates in the reverse transport of cholesterol from tissues to the liver for excretion by promoting cholesterol efflux from tissues and by acting as a cofactor for the lecithin cholesterol acyltransferase (LCAT). As part of the SPAP complex, activates spermatozoa motility. The polypeptide is Apolipoprotein A-I (APOA1) (Orycteropus afer (Aardvark)).